Reading from the N-terminus, the 312-residue chain is Ribosomal protein L11 methyltransferase (312 aa).

The S-adenosyl-L-methionine site is built by T159, G180, D201, and N244.

It belongs to the methyltransferase superfamily. PrmA family.

It localises to the cytoplasm. The enzyme catalyses L-lysyl-[protein] + 3 S-adenosyl-L-methionine = N(6),N(6),N(6)-trimethyl-L-lysyl-[protein] + 3 S-adenosyl-L-homocysteine + 3 H(+). Methylates ribosomal protein L11. The polypeptide is Ribosomal protein L11 methyltransferase (Desulfitobacterium hafniense (strain DSM 10664 / DCB-2)).